Here is a 792-residue protein sequence, read N- to C-terminus: Xaa-Pro dipeptidyl-peptidase (792 aa).

Active-site charge relay system residues include Ser-363, Asp-482, and His-513.

This sequence belongs to the peptidase S15 family. As to quaternary structure, homodimer.

Its subcellular location is the cytoplasm. The enzyme catalyses Hydrolyzes Xaa-Pro-|- bonds to release unblocked, N-terminal dipeptides from substrates including Ala-Pro-|-p-nitroanilide and (sequentially) Tyr-Pro-|-Phe-Pro-|-Gly-Pro-|-Ile.. Removes N-terminal dipeptides sequentially from polypeptides having unsubstituted N-termini provided that the penultimate residue is proline. The sequence is that of Xaa-Pro dipeptidyl-peptidase from Lactobacillus delbrueckii subsp. bulgaricus (strain ATCC 11842 / DSM 20081 / BCRC 10696 / JCM 1002 / NBRC 13953 / NCIMB 11778 / NCTC 12712 / WDCM 00102 / Lb 14).